Consider the following 621-residue polypeptide: Chaperone protein HtpG (621 aa).

The segment at 1-328 (MKQEKKKFDA…SEDLPLNISR (328 aa)) is a; substrate-binding. Positions 329-544 (ESLQHNNVLE…EAAMDIRMER (216 aa)) are b. Positions 478–498 (DVDQATSSSEEKNKDDKKSDD) are disordered. Basic and acidic residues predominate over residues 486–498 (SEEKNKDDKKSDD). Residues 545–621 (FLIEQKQIAN…LNDIVQKAIL (77 aa)) form a c region.

The protein belongs to the heat shock protein 90 family. As to quaternary structure, homodimer.

It localises to the cytoplasm. Molecular chaperone. Has ATPase activity. In Rickettsia bellii (strain RML369-C), this protein is Chaperone protein HtpG.